The following is a 358-amino-acid chain: Phospho-N-acetylmuramoyl-pentapeptide-transferase (358 aa).

10 helical membrane passes run 21 to 41 (YLTL…FVVG), 71 to 91 (TMGG…WADL), 95 to 115 (YIWV…VDDY), 133 to 153 (FWQS…ASVA), 166 to 186 (VAVN…VGSS), 197 to 217 (GLAV…AYAA), 234 to 254 (AGEL…FLWF), 261 to 281 (VFMG…LAVL), 286 to 306 (LVLF…MLQV), and 337 to 357 (IVRF…TLKI).

Belongs to the glycosyltransferase 4 family. MraY subfamily. The cofactor is Mg(2+).

It localises to the cell inner membrane. The enzyme catalyses UDP-N-acetyl-alpha-D-muramoyl-L-alanyl-gamma-D-glutamyl-meso-2,6-diaminopimeloyl-D-alanyl-D-alanine + di-trans,octa-cis-undecaprenyl phosphate = di-trans,octa-cis-undecaprenyl diphospho-N-acetyl-alpha-D-muramoyl-L-alanyl-D-glutamyl-meso-2,6-diaminopimeloyl-D-alanyl-D-alanine + UMP. The protein operates within cell wall biogenesis; peptidoglycan biosynthesis. Functionally, catalyzes the initial step of the lipid cycle reactions in the biosynthesis of the cell wall peptidoglycan: transfers peptidoglycan precursor phospho-MurNAc-pentapeptide from UDP-MurNAc-pentapeptide onto the lipid carrier undecaprenyl phosphate, yielding undecaprenyl-pyrophosphoryl-MurNAc-pentapeptide, known as lipid I. The chain is Phospho-N-acetylmuramoyl-pentapeptide-transferase from Nitrosococcus oceani (strain ATCC 19707 / BCRC 17464 / JCM 30415 / NCIMB 11848 / C-107).